Reading from the N-terminus, the 69-residue chain is Large ribosomal subunit protein uL29 (69 aa).

The protein belongs to the universal ribosomal protein uL29 family.

This Sulfolobus acidocaldarius (strain ATCC 33909 / DSM 639 / JCM 8929 / NBRC 15157 / NCIMB 11770) protein is Large ribosomal subunit protein uL29.